Here is a 541-residue protein sequence, read N- to C-terminus: Protein panoramix (541 aa).

The interaction with Piwi stretch occupies residues 1-169; that stretch reads MEAPMKLEVK…TLVPDEQQSF (169 aa). 2 disordered regions span residues 52–75 and 198–281; these read SDPE…LQPS and TAEN…TELD. Residues 194–216 are a coiled coil; sequence MLEMTAENRKVKHKKKKHKKERS. A compositionally biased stretch (basic residues) spans 203-220; sequence KVKHKKKKHKKERSHRSN. Composition is skewed to basic and acidic residues over residues 241–251 and 269–279; these read DDKNQFDCDYR and SSKERKLRDTE. The nxf2-interacting region (NIR) stretch occupies residues 315 to 343; the sequence is LSKADKRSLAVARAELVLEQIQQKANKEE. A coiled-coil region spans residues 323–343; sequence LAVARAELVLEQIQQKANKEE. A necessary for interaction with nxf2 and protein stability region spans residues 387–446; that stretch reads TPGTRIDLSKWGLETVPEATKRLLRLLGIDVARLKELQSTVKPSQRILKLKKEQLEQGLA.

As to quaternary structure, in the ovaries, part of a complex composed of at least Panx, nxf2, piwi and Nxt1. The complex is knowns as Panx-induced cotranscriptional silencing (PICTS) complex, Panx-nxf2-dependent TAP/p15 silencing (Pandas complex), SFiNX (silencing factor interacting nuclear export variant) or piwi-Panx-nxf2-p15 (PPNP) complex. Interacts (via NIR region) with nxf2 (via TAP-C domain); the interaction is direct. Expressed in female gonads (at protein level).

Its subcellular location is the nucleus. Its function is as follows. Acts via the piwi-interacting RNA (piRNA) pathway which mediates the repression of transposable elements during meiosis by forming complexes composed of piRNAs and piwi proteins and governs the methylation and subsequent repression of transposons. Required for transcriptional silencing of transposons targeted by piwi and confers its effects by interacting with nascent RNA transcripts. Likely to be recruited to nascent transcripts cotranscriptionally by piwi and to recruit additional factors involved in transcriptional silencing. In the ovaries, forms a complex with nxf2, piwi and Nxt1 which acts as effectors of cotranscriptional transposon silencing. The interaction with nxf2 stabilizes the nuclear protein complex. The sequence is that of Protein panoramix from Drosophila melanogaster (Fruit fly).